The primary structure comprises 314 residues: Mitochondrial 2-oxoglutarate/malate carrier protein (314 aa).

Ala-2 bears the N-acetylalanine mark. Ser-6 is subject to Phosphoserine. 3 Solcar repeats span residues 23–108 (VKFL…LFER), 117–208 (PGFL…SKQF), and 217–306 (DNIL…MNKA). The chain crosses the membrane as a helical span at residues 24-42 (KFLFGGLAGMGATVFVQPL). Lys-57 bears the N6-succinyllysine mark. A helical transmembrane segment spans residues 83-101 (GLSAGLLRQATYTTTRLGI). Tyr-102 carries the phosphotyrosine modification. 3 helical membrane-spanning segments follow: residues 119-140 (FLLKAVIGMTAGATGAFVGTPA), 183-202 (GCIPTMARAVVVNAAQLASY), and 222-240 (HFCASMISGLVTTAASMPV). Lys-256 bears the N6-acetyllysine mark. Residues 281 to 300 (GFTPYYARLGPHTVLTFIFL) traverse the membrane as a helical segment.

It belongs to the mitochondrial carrier (TC 2.A.29) family. Interacts with SMIM26. The N-terminus is blocked. Heart, liver and brain.

The protein resides in the mitochondrion inner membrane. It carries out the reaction (S)-malate(in) + 2-oxoglutarate(out) = (S)-malate(out) + 2-oxoglutarate(in). It catalyses the reaction malonate(in) + 2-oxoglutarate(out) = malonate(out) + 2-oxoglutarate(in). The enzyme catalyses succinate(in) + 2-oxoglutarate(out) = succinate(out) + 2-oxoglutarate(in). The catalysed reaction is maleate(in) + 2-oxoglutarate(out) = maleate(out) + 2-oxoglutarate(in). It carries out the reaction oxaloacetate(in) + 2-oxoglutarate(out) = oxaloacetate(out) + 2-oxoglutarate(in). Functionally, catalyzes the transport of 2-oxoglutarate (alpha-oxoglutarate) across the inner mitochondrial membrane in an electroneutral exchange for malate. Can also exchange 2-oxoglutarate for other dicarboxylic acids such as malonate, succinate, maleate and oxaloacetate, although with lower affinity. Contributes to several metabolic processes, including the malate-aspartate shuttle, the oxoglutarate/isocitrate shuttle, in gluconeogenesis from lactate, and in nitrogen metabolism. Maintains mitochondrial fusion and fission events, and the organization and morphology of cristae. Involved in the regulation of apoptosis. Helps protect from cytotoxic-induced apoptosis by modulating glutathione levels in mitochondria. This chain is Mitochondrial 2-oxoglutarate/malate carrier protein (SLC25A11), found in Bos taurus (Bovine).